Here is a 536-residue protein sequence, read N- to C-terminus: Lariat debranching enzyme (536 aa).

A divalent metal cation contacts are provided by Cys-8, His-10, Asp-39, and Asn-84. The lariat recognition loop stretch occupies residues 124–154 (SGIFKSHDYRKGHFECPPYNQQTIRSAYHVR). A divalent metal cation-binding residues include His-174, His-226, and His-228. The disordered stretch occupies residues 388 to 536 (EEGSVRGEYE…YAAEDEDEAK (149 aa)). A compositionally biased stretch (polar residues) spans 414–426 (EYNTDNSGLSSIN). Residues 430–441 (IMLDDEGGDEDL) are compositionally biased toward acidic residues. The segment covering 484–504 (ELEKSGVNKQVEEKSLNERPL) has biased composition (basic and acidic residues).

The protein belongs to the lariat debranching enzyme family. Requires Fe(2+) as cofactor. Zn(2+) serves as cofactor. Mn(2+) is required as a cofactor.

It is found in the nucleus. With respect to regulation, active in presence of diverse metals including Fe(2+), Zn(2+), Mn(2+). Also activated by Ca(2+). Binds two metal cations in two adjacent alpha and beta metal-binding pockets. Its function is as follows. Cleaves the 2'-5' phosphodiester linkage at the branch point of excised lariat intron RNA and converts them into linear molecules that can be subsequently degraded, thereby facilitating ribonucleotide turnover. Linked to its role in pre-mRNA processing mechanism, may also participate in retrovirus replication and have an antiviral cell-intrinsic defense function. The chain is Lariat debranching enzyme (DBR1) from Gallus gallus (Chicken).